Here is a 367-residue protein sequence, read N- to C-terminus: Lysophosphatidic acid receptor 5 (367 aa).

The Extracellular portion of the chain corresponds to 1 to 25 (MQANSSAKSLPTECPDYQPIHHLHL). Asn4 carries N-linked (GlcNAc...) asparagine glycosylation. A helical transmembrane segment spans residues 26–46 (VVYSVVLAAGLPLNALALWVF). At 47-54 (LRALRVHS) the chain is on the cytoplasmic side. Residues 55-75 (VVSVYMCNLAASDLLFTLSLP) traverse the membrane as a helical segment. The Extracellular portion of the chain corresponds to 76 to 95 (LRLSYYARHYWPFPDFLCQL). A disulfide bridge connects residues Cys93 and Cys174. Residues 96–116 (AGAVFQMNMYGSCIFLTLINV) traverse the membrane as a helical segment. Over 117–135 (DRYAAIVHPLRLRHLRRPR) the chain is Cytoplasmic. A helical transmembrane segment spans residues 136–156 (VARLLCLGVWALILVFAVPTI). The Extracellular portion of the chain corresponds to 157–186 (LAHQPSSCARDGRNVSLCFESFSDKLWKGS). Asn170 is a glycosylation site (N-linked (GlcNAc...) asparagine). Residues 187–207 (LLPLLLLAEALGFLLPLAAVV) traverse the membrane as a helical segment. At 208–238 (YSSGRVFWTLARPDATRSQRRRKTVRLLLAS) the chain is on the cytoplasmic side. A helical membrane pass occupies residues 239 to 259 (LVIFLLCFVPYNATLAVYGLL). The Extracellular portion of the chain corresponds to 260–275 (RGEVVPASSEARKKVR). The chain crosses the membrane as a helical span at residues 276-296 (GVLMVMVLLAGANCVLDPLVY). Topologically, residues 297–367 (YFSAEGFRNT…FTPSHEDSSF (71 aa)) are cytoplasmic. Residues 332–350 (LTETAHASTLTTTSQGQLQ) are compositionally biased toward low complexity. The disordered stretch occupies residues 332–367 (LTETAHASTLTTTSQGQLQPSDPRSSFTPSHEDSSF). A compositionally biased stretch (polar residues) spans 351 to 360 (PSDPRSSFTP).

The protein belongs to the G-protein coupled receptor 1 family.

Its subcellular location is the cell membrane. Its function is as follows. Receptor for lysophosphatidic acid (LPA), a mediator of diverse cellular activities. The chain is Lysophosphatidic acid receptor 5 (LPAR5) from Bos taurus (Bovine).